Here is a 152-residue protein sequence, read N- to C-terminus: Deoxyuridine 5'-triphosphate nucleotidohydrolase (152 aa).

Residues 71–73, Asn84, 88–90, and Met98 each bind substrate; these read RSG and LID.

This sequence belongs to the dUTPase family. It depends on Mg(2+) as a cofactor.

The enzyme catalyses dUTP + H2O = dUMP + diphosphate + H(+). It participates in pyrimidine metabolism; dUMP biosynthesis; dUMP from dCTP (dUTP route): step 2/2. This enzyme is involved in nucleotide metabolism: it produces dUMP, the immediate precursor of thymidine nucleotides and it decreases the intracellular concentration of dUTP so that uracil cannot be incorporated into DNA. This chain is Deoxyuridine 5'-triphosphate nucleotidohydrolase, found in Shewanella woodyi (strain ATCC 51908 / MS32).